The following is a 190-amino-acid chain: Recombination protein RecR (190 aa).

Residues 58-73 form a C4-type zinc finger; the sequence is CEQCGALSENELCEIC. One can recognise a Toprim domain in the interval 81–167; that stretch reads NILCIVESPK…TFSKIAQGIP (87 aa).

This sequence belongs to the RecR family.

In terms of biological role, may play a role in DNA repair. It seems to be involved in an RecBC-independent recombinational process of DNA repair. It may act with RecF and RecO. This chain is Recombination protein RecR, found in Campylobacter jejuni subsp. doylei (strain ATCC BAA-1458 / RM4099 / 269.97).